The chain runs to 278 residues: Malonyl-[acyl-carrier protein] O-methyltransferase (278 aa).

Belongs to the methyltransferase superfamily.

It catalyses the reaction malonyl-[ACP] + S-adenosyl-L-methionine = malonyl-[ACP] methyl ester + S-adenosyl-L-homocysteine. The protein operates within cofactor biosynthesis; biotin biosynthesis. Its function is as follows. Converts the free carboxyl group of a malonyl-thioester to its methyl ester by transfer of a methyl group from S-adenosyl-L-methionine (SAM). It allows to synthesize pimeloyl-ACP via the fatty acid synthetic pathway. This Brevibacillus brevis (strain 47 / JCM 6285 / NBRC 100599) protein is Malonyl-[acyl-carrier protein] O-methyltransferase.